The sequence spans 150 residues: 3-dehydroquinate dehydratase (150 aa).

Catalysis depends on Tyr-26, which acts as the Proton acceptor. Residues Asn-75, His-81, and Asp-88 each coordinate substrate. Residue His-101 is the Proton donor of the active site. Substrate is bound by residues 102 to 103 and Arg-112; that span reads LS.

Belongs to the type-II 3-dehydroquinase family. In terms of assembly, homododecamer.

The enzyme catalyses 3-dehydroquinate = 3-dehydroshikimate + H2O. It participates in metabolic intermediate biosynthesis; chorismate biosynthesis; chorismate from D-erythrose 4-phosphate and phosphoenolpyruvate: step 3/7. Its function is as follows. Catalyzes a trans-dehydration via an enolate intermediate. This Shewanella loihica (strain ATCC BAA-1088 / PV-4) protein is 3-dehydroquinate dehydratase.